An 89-amino-acid polypeptide reads, in one-letter code: UPF0297 protein lp_2275 (89 aa).

This sequence belongs to the UPF0297 family.

The polypeptide is UPF0297 protein lp_2275 (Lactiplantibacillus plantarum (strain ATCC BAA-793 / NCIMB 8826 / WCFS1) (Lactobacillus plantarum)).